A 191-amino-acid chain; its full sequence is Ribosome maturation factor RimP (191 aa).

Belongs to the RimP family.

It localises to the cytoplasm. Its function is as follows. Required for maturation of 30S ribosomal subunits. The protein is Ribosome maturation factor RimP of Caulobacter vibrioides (strain NA1000 / CB15N) (Caulobacter crescentus).